We begin with the raw amino-acid sequence, 371 residues long: Loganic acid O-methyltransferase (371 aa).

An S-adenosyl-L-homocysteine-binding site is contributed by tyrosine 31. 2 residues coordinate loganate: tyrosine 37 and glutamine 38. S-adenosyl-L-homocysteine is bound by residues cysteine 78, asparagine 83, aspartate 114, histidine 115, serine 141, and phenylalanine 142. Histidine 162 and tryptophan 163 together coordinate loganate. Position 180 (asparagine 180) interacts with Mg(2+). Loganate is bound by residues alanine 241 and histidine 245. Residues aspartate 267, phenylalanine 269, and asparagine 270 each coordinate Mg(2+). 2 residues coordinate loganate: glutamine 273 and glutamine 316.

This sequence belongs to the methyltransferase superfamily. Type-7 methyltransferase family. In terms of assembly, homodimer. Mg(2+) serves as cofactor. Expressed in leaves (especially in leaf epidermis), flowers, siliques and stems, and, at low levels, in hairy roots.

The catalysed reaction is loganate + S-adenosyl-L-methionine = loganin + S-adenosyl-L-homocysteine. It functions in the pathway alkaloid biosynthesis. Its activity is regulated as follows. Strongly repressed by loganin and slightly by S-adenosyl-L-homocysteine. In terms of biological role, component of the seco-iridoid and derivatives monoterpenoid indole alkaloids (MIAs, e.g. vinblastine and ajmalicine) biosynthesis pathway. Catalyzes the methylation of loganic acid (6S,7R) to produce loganin. Weak activity with secologanic acid as substrate. Inactive on deoxyloganic, dehydrologanic, epiloganic and loganetic acid. This chain is Loganic acid O-methyltransferase, found in Catharanthus roseus (Madagascar periwinkle).